Consider the following 185-residue polypeptide: ATP-dependent protease subunit HslV (185 aa).

T12 is a catalytic residue. Na(+) is bound by residues A168, C171, and T174.

Belongs to the peptidase T1B family. HslV subfamily. A double ring-shaped homohexamer of HslV is capped on each side by a ring-shaped HslU homohexamer. The assembly of the HslU/HslV complex is dependent on binding of ATP.

Its subcellular location is the cytoplasm. The enzyme catalyses ATP-dependent cleavage of peptide bonds with broad specificity.. Allosterically activated by HslU binding. In terms of biological role, protease subunit of a proteasome-like degradation complex believed to be a general protein degrading machinery. This Cereibacter sphaeroides (strain KD131 / KCTC 12085) (Rhodobacter sphaeroides) protein is ATP-dependent protease subunit HslV.